A 74-amino-acid chain; its full sequence is MRFYIAFFFLLLAADMALSFEIGNSEELERLSMVYGEVESERGCTHGSCENGETCCDGWRCRYTGRAVPFMCVP.

A signal peptide spans 1–19; sequence MRFYIAFFFLLLAADMALS. A propeptide spanning residues 20 to 30 is cleaved from the precursor; the sequence is FEIGNSEELER. Intrachain disulfides connect cysteine 44-cysteine 56, cysteine 49-cysteine 61, and cysteine 55-cysteine 72.

As to expression, expressed by the venom gland.

The protein localises to the secreted. This Agelena orientalis (Funnel-web spider) protein is U6-agatoxin-Ao1a.